Here is a 408-residue protein sequence, read N- to C-terminus: Leucine aminopeptidase 1 (408 aa).

An N-terminal signal peptide occupies residues 1 to 16; it reads MKVSSAIALLLPVVAA. The propeptide occupies 17-89; that stretch reads RFVDSAFEQD…SAQSATTGPA (73 aa). N-linked (GlcNAc...) asparagine glycosylation is found at asparagine 95, asparagine 108, and asparagine 182. Zn(2+)-binding residues include histidine 190, aspartate 209, glutamate 248, and aspartate 275. Residues cysteine 324 and cysteine 328 are joined by a disulfide bond. Histidine 357 contributes to the Zn(2+) binding site.

The protein belongs to the peptidase M28 family. M28E subfamily. As to quaternary structure, monomer. It depends on Zn(2+) as a cofactor.

It is found in the secreted. Extracellular aminopeptidase that allows assimilation of proteinaceous substrates. The sequence is that of Leucine aminopeptidase 1 (LAP1) from Grosmannia clavigera (strain kw1407 / UAMH 11150) (Blue stain fungus).